A 489-amino-acid chain; its full sequence is Cobyric acid synthase (489 aa).

In terms of domain architecture, GATase cobBQ-type spans 252–441 (ALTIGVIQLP…IHGIFANTEF (190 aa)). Cysteine 330 acts as the Nucleophile in catalysis. Histidine 433 is a catalytic residue.

This sequence belongs to the CobB/CobQ family. CobQ subfamily.

It functions in the pathway cofactor biosynthesis; adenosylcobalamin biosynthesis. Its function is as follows. Catalyzes amidations at positions B, D, E, and G on adenosylcobyrinic A,C-diamide. NH(2) groups are provided by glutamine, and one molecule of ATP is hydrogenolyzed for each amidation. This Herpetosiphon aurantiacus (strain ATCC 23779 / DSM 785 / 114-95) protein is Cobyric acid synthase.